Reading from the N-terminus, the 405-residue chain is Chorismate synthase (405 aa).

The NADP(+) site is built by R43 and R49. FMN-binding positions include 138–140 (RAS) and 259–260 (QA). The segment covering 275 to 286 (RRGSQAHDEMRP) has biased composition (basic and acidic residues). Positions 275-308 (RRGSQAHDEMRPGPDGVLRSTNRAGGLEGGMTNG) are disordered. FMN-binding positions include G303, 318-322 (KPIST), and R344.

The protein belongs to the chorismate synthase family. As to quaternary structure, homotetramer. FMNH2 serves as cofactor.

It carries out the reaction 5-O-(1-carboxyvinyl)-3-phosphoshikimate = chorismate + phosphate. It functions in the pathway metabolic intermediate biosynthesis; chorismate biosynthesis; chorismate from D-erythrose 4-phosphate and phosphoenolpyruvate: step 7/7. Functionally, catalyzes the anti-1,4-elimination of the C-3 phosphate and the C-6 proR hydrogen from 5-enolpyruvylshikimate-3-phosphate (EPSP) to yield chorismate, which is the branch point compound that serves as the starting substrate for the three terminal pathways of aromatic amino acid biosynthesis. This reaction introduces a second double bond into the aromatic ring system. The chain is Chorismate synthase from Nocardia farcinica (strain IFM 10152).